The chain runs to 750 residues: Photosystem I P700 chlorophyll a apoprotein A1 (750 aa).

8 consecutive transmembrane segments (helical) span residues 70–93 (VFSAHFGQLSIIFLWLSGMYFHGA), 156–179 (LYCTAIGALVFAGLMLFAGWFHYH), 195–219 (LNHHLAGLLGLGSLSWAGHQVHVSL), 291–309 (IVHHHLAIAILFLIAGHMY), 346–369 (WHAQLSLNLAMLGSLTIVVAHHMY), 385–411 (LSLFTHHMWIGGFLIVGAAAHAAIFMV), 433–455 (AIISHLNWACIFLGFHSFGLYIH), and 531–549 (FLVHHIHAFTIHVTVLILL). C573 and C582 together coordinate [4Fe-4S] cluster. Transmembrane regions (helical) follow at residues 589-610 (HVFLGLFWMYNAISVVIFHFSW) and 664-686 (LSAYGLFFLGAHFVWAFSLMFLF). H675 is a chlorophyll a' binding site. Positions 683 and 691 each coordinate chlorophyll a. W692 contacts phylloquinone. A helical membrane pass occupies residues 724-744 (AVGVTHYLLGGIATTWAFFLA).

This sequence belongs to the PsaA/PsaB family. As to quaternary structure, the PsaA/B heterodimer binds the P700 chlorophyll special pair and subsequent electron acceptors. PSI consists of a core antenna complex that captures photons, and an electron transfer chain that converts photonic excitation into a charge separation. The eukaryotic PSI reaction center is composed of at least 11 subunits. It depends on P700 is a chlorophyll a/chlorophyll a' dimer, A0 is one or more chlorophyll a, A1 is one or both phylloquinones and FX is a shared 4Fe-4S iron-sulfur center. as a cofactor.

The protein resides in the plastid. The protein localises to the chloroplast thylakoid membrane. The catalysed reaction is reduced [plastocyanin] + hnu + oxidized [2Fe-2S]-[ferredoxin] = oxidized [plastocyanin] + reduced [2Fe-2S]-[ferredoxin]. PsaA and PsaB bind P700, the primary electron donor of photosystem I (PSI), as well as the electron acceptors A0, A1 and FX. PSI is a plastocyanin-ferredoxin oxidoreductase, converting photonic excitation into a charge separation, which transfers an electron from the donor P700 chlorophyll pair to the spectroscopically characterized acceptors A0, A1, FX, FA and FB in turn. Oxidized P700 is reduced on the lumenal side of the thylakoid membrane by plastocyanin. The chain is Photosystem I P700 chlorophyll a apoprotein A1 from Piper cenocladum (Ant piper).